The primary structure comprises 192 residues: Large ribosomal subunit protein bL9 (192 aa).

Residues 173–192 (ALRPEDFFDPEADGLDENEA) are disordered. Over residues 179–192 (FFDPEADGLDENEA) the composition is skewed to acidic residues.

Belongs to the bacterial ribosomal protein bL9 family.

Its function is as follows. Binds to the 23S rRNA. The polypeptide is Large ribosomal subunit protein bL9 (Rhizobium etli (strain ATCC 51251 / DSM 11541 / JCM 21823 / NBRC 15573 / CFN 42)).